Consider the following 251-residue polypeptide: Long-distance movement protein (251 aa).

Positions 25-134 (SGKSCNSGGA…VAQPQQRWAK (110 aa)) are disordered. A Nuclear localization signal motif is present at residues 108–122 (RPRRRAGRSGGMDPR). The Nuclear export signal motif lies at 149-153 (LPSLL).

In terms of assembly, homooligomer. Interacts with host FIB2; this interaction, is required for ORF3 protein transiting through host Cajal body and nucleolus, relocalization of fibrillarin to the cytoplasm, and in presence of viral RNA, leads to the formation of stable RNPs.

It localises to the host cytoplasm. The protein localises to the host nucleus. Its subcellular location is the host nucleolus. Functionally, protects and provides long-distance movement to viral RNA. Self associates and binds viral RNA and fibrillarin to form filamentous ribonucleoproteins (RNPs) protected from RNase. ORF3 protein actually fulfills functions that are usually provided by capsid protein, which is absent from umbraviruses' genome. This Clitoria (Hyacinth bean) protein is Long-distance movement protein (ORF3).